The following is a 199-amino-acid chain: AICSLVLYLLSLMLMEKLSSNTVDAQEVELIWTILPAIVLILLALPSLQILYMMDEIDEPDLTLKAIGHQWYWSYEYTDFKDLAFDSYMIPTTELPSGHFRLLEVDHRVVVPMESPIRVIVTAGDVLHSWAVPTLGVKTDAIPGRLNQTSFITTRPGIFYGQCSEICGANHSYMPIVVESTPLAHFESWSSLLSSSSSL.

The helical transmembrane segment at 1 to 13 (AICSLVLYLLSLM) threads the bilayer. At 14-26 (LMEKLSSNTVDAQ) the chain is on the mitochondrial matrix side. The chain crosses the membrane as a helical span at residues 27–54 (EVELIWTILPAIVLILLALPSLQILYMM). The Mitochondrial intermembrane segment spans residues 55-199 (DEIDEPDLTL…SSLLSSSSSL (145 aa)). Positions 128, 163, 165, 167, 171, and 174 each coordinate Cu cation. Residue Glu-165 coordinates Mg(2+).

Belongs to the cytochrome c oxidase subunit 2 family. As to quaternary structure, component of the cytochrome c oxidase (complex IV, CIV), a multisubunit enzyme composed of 14 subunits. The complex is composed of a catalytic core of 3 subunits MT-CO1, MT-CO2 and MT-CO3, encoded in the mitochondrial DNA, and 11 supernumerary subunits COX4I, COX5A, COX5B, COX6A, COX6B, COX6C, COX7A, COX7B, COX7C, COX8 and NDUFA4, which are encoded in the nuclear genome. The complex exists as a monomer or a dimer and forms supercomplexes (SCs) in the inner mitochondrial membrane with NADH-ubiquinone oxidoreductase (complex I, CI) and ubiquinol-cytochrome c oxidoreductase (cytochrome b-c1 complex, complex III, CIII), resulting in different assemblies (supercomplex SCI(1)III(2)IV(1) and megacomplex MCI(2)III(2)IV(2)). Found in a complex with TMEM177, COA6, COX18, COX20, SCO1 and SCO2. Interacts with TMEM177 in a COX20-dependent manner. Interacts with COX20. Interacts with COX16. The cofactor is Cu cation.

It is found in the mitochondrion inner membrane. It carries out the reaction 4 Fe(II)-[cytochrome c] + O2 + 8 H(+)(in) = 4 Fe(III)-[cytochrome c] + 2 H2O + 4 H(+)(out). Component of the cytochrome c oxidase, the last enzyme in the mitochondrial electron transport chain which drives oxidative phosphorylation. The respiratory chain contains 3 multisubunit complexes succinate dehydrogenase (complex II, CII), ubiquinol-cytochrome c oxidoreductase (cytochrome b-c1 complex, complex III, CIII) and cytochrome c oxidase (complex IV, CIV), that cooperate to transfer electrons derived from NADH and succinate to molecular oxygen, creating an electrochemical gradient over the inner membrane that drives transmembrane transport and the ATP synthase. Cytochrome c oxidase is the component of the respiratory chain that catalyzes the reduction of oxygen to water. Electrons originating from reduced cytochrome c in the intermembrane space (IMS) are transferred via the dinuclear copper A center (CU(A)) of subunit 2 and heme A of subunit 1 to the active site in subunit 1, a binuclear center (BNC) formed by heme A3 and copper B (CU(B)). The BNC reduces molecular oxygen to 2 water molecules using 4 electrons from cytochrome c in the IMS and 4 protons from the mitochondrial matrix. This Rhea americana (Greater rhea) protein is Cytochrome c oxidase subunit 2 (MT-CO2).